Here is a 340-residue protein sequence, read N- to C-terminus: Quinic acid degradation cluster protein x (340 aa).

E90, D115, L117, D118, and D262 together coordinate Mg(2+). E90 is a substrate binding site. Substrate is bound by residues 117-120 (LDGT) and D262.

Belongs to the inositol monophosphatase superfamily.

Part of the qa gene cluster that mediates the catabolism of quinic acid (QA) and as such, allows the use of QA as a sole carbon source. Its function within the pathway has not been determined yet but it probably plays a regulatory role. The qa cluster encodes 3 inducible enymes (qa-2, qa-3 and qa-4) catalyzing the first three reactions in the catabolism of quinic acid to protocatechuic acid (also known as 3,4-Dihydroxybenzoic acid). This is Quinic acid degradation cluster protein x from Neurospora crassa (strain ATCC 24698 / 74-OR23-1A / CBS 708.71 / DSM 1257 / FGSC 987).